The sequence spans 472 residues: ATP-dependent protease ATPase subunit HslU (472 aa).

ATP contacts are provided by residues Ile-20, 62–67, Asp-285, Glu-350, and Arg-422; that span reads GVGKTE.

It belongs to the ClpX chaperone family. HslU subfamily. As to quaternary structure, a double ring-shaped homohexamer of HslV is capped on each side by a ring-shaped HslU homohexamer. The assembly of the HslU/HslV complex is dependent on binding of ATP.

The protein localises to the cytoplasm. Functionally, ATPase subunit of a proteasome-like degradation complex; this subunit has chaperone activity. The binding of ATP and its subsequent hydrolysis by HslU are essential for unfolding of protein substrates subsequently hydrolyzed by HslV. HslU recognizes the N-terminal part of its protein substrates and unfolds these before they are guided to HslV for hydrolysis. This is ATP-dependent protease ATPase subunit HslU from Lactiplantibacillus plantarum (strain ATCC BAA-793 / NCIMB 8826 / WCFS1) (Lactobacillus plantarum).